The sequence spans 87 residues: Large ribosomal subunit protein bL31B (87 aa).

Belongs to the bacterial ribosomal protein bL31 family. Type B subfamily. As to quaternary structure, part of the 50S ribosomal subunit.

This chain is Large ribosomal subunit protein bL31B, found in Burkholderia vietnamiensis (strain G4 / LMG 22486) (Burkholderia cepacia (strain R1808)).